The sequence spans 210 residues: ER membrane protein complex subunit 8 (210 aa).

The region spanning 4–150 (VKLTTQAYCK…IHVYEHHENR (147 aa)) is the MPN domain.

The protein belongs to the EMC8/EMC9 family. Component of the ER membrane protein complex (EMC). EMC8 and EMC9 are mutually exclusive subunits of the EMC complex. Expressed in liver, pancreas, heart, lung, kidney, brain, skeletal muscle, and placenta. Expression levels are highest in pancreas and moderate in heart, skeletal muscle, and placenta.

It is found in the endoplasmic reticulum membrane. Its function is as follows. Part of the endoplasmic reticulum membrane protein complex (EMC) that enables the energy-independent insertion into endoplasmic reticulum membranes of newly synthesized membrane proteins. Preferentially accommodates proteins with transmembrane domains that are weakly hydrophobic or contain destabilizing features such as charged and aromatic residues. Involved in the cotranslational insertion of multi-pass membrane proteins in which stop-transfer membrane-anchor sequences become ER membrane spanning helices. It is also required for the post-translational insertion of tail-anchored/TA proteins in endoplasmic reticulum membranes. By mediating the proper cotranslational insertion of N-terminal transmembrane domains in an N-exo topology, with translocated N-terminus in the lumen of the ER, controls the topology of multi-pass membrane proteins like the G protein-coupled receptors. By regulating the insertion of various proteins in membranes, it is indirectly involved in many cellular processes. In Homo sapiens (Human), this protein is ER membrane protein complex subunit 8 (EMC8).